A 969-amino-acid chain; its full sequence is RNA polymerase-associated protein RapA (969 aa).

The 171-residue stretch at 164-334 folds into the Helicase ATP-binding domain; it reads EVGRRYAPRV…FARLRLLDPD (171 aa). An ATP-binding site is contributed by 177–184; sequence DEVGLGKT. Positions 280–283 match the DEAH box motif; that stretch reads DEAH. In terms of domain architecture, Helicase C-terminal spans 492–668; that stretch reads RVNWLLELLK…GKSDGLESLI (177 aa).

This sequence belongs to the SNF2/RAD54 helicase family. RapA subfamily. In terms of assembly, interacts with the RNAP. Has a higher affinity for the core RNAP than for the holoenzyme. Its ATPase activity is stimulated by binding to RNAP.

Transcription regulator that activates transcription by stimulating RNA polymerase (RNAP) recycling in case of stress conditions such as supercoiled DNA or high salt concentrations. Probably acts by releasing the RNAP, when it is trapped or immobilized on tightly supercoiled DNA. Does not activate transcription on linear DNA. Probably not involved in DNA repair. The chain is RNA polymerase-associated protein RapA from Aliivibrio fischeri (strain MJ11) (Vibrio fischeri).